The following is an 85-amino-acid chain: Beta-insect depressant toxin Lqh-dprIT3d (85 aa).

The first 21 residues, 1-21 (MKLLLLLTISASMLIEGLVNA), serve as a signal peptide directing secretion. The LCN-type CS-alpha/beta domain occupies 22-82 (DGYIRGGDGC…EWDYETNTCG (61 aa)). Cystine bridges form between cysteine 31–cysteine 81, cysteine 35–cysteine 56, cysteine 42–cysteine 63, and cysteine 46–cysteine 65. Glycine 82 carries the post-translational modification Glycine amide.

Belongs to the long (4 C-C) scorpion toxin superfamily. Sodium channel inhibitor family. Beta subfamily. In terms of tissue distribution, expressed by the venom gland.

The protein localises to the secreted. Its function is as follows. Depressant insect beta-toxins cause a transient contraction paralysis followed by a slow flaccid paralysis. They bind voltage-independently at site-4 of sodium channels (Nav) and block action potentials, primarily by depolarizing the axonal membrane and suppressing the sodium current. This depressant toxin is active only on insects. It is found in a relatively small amount in the venom, and its activity on insects is 10-fold higher compared to other known depressant toxins. The polypeptide is Beta-insect depressant toxin Lqh-dprIT3d (Leiurus hebraeus (Hebrew deathstalker scorpion)).